The chain runs to 344 residues: Anthranilate phosphoribosyltransferase (344 aa).

Residues glycine 79, 82–83 (GD), threonine 87, 89–92 (NIST), 107–115 (KHGNRSVSS), and serine 119 contribute to the 5-phospho-alpha-D-ribose 1-diphosphate site. Glycine 79 serves as a coordination point for anthranilate. Serine 91 lines the Mg(2+) pocket. Asparagine 110 lines the anthranilate pocket. Arginine 165 is an anthranilate binding site. Residues aspartate 224 and glutamate 225 each contribute to the Mg(2+) site.

It belongs to the anthranilate phosphoribosyltransferase family. Homodimer. Mg(2+) is required as a cofactor.

It catalyses the reaction N-(5-phospho-beta-D-ribosyl)anthranilate + diphosphate = 5-phospho-alpha-D-ribose 1-diphosphate + anthranilate. Its pathway is amino-acid biosynthesis; L-tryptophan biosynthesis; L-tryptophan from chorismate: step 2/5. Functionally, catalyzes the transfer of the phosphoribosyl group of 5-phosphorylribose-1-pyrophosphate (PRPP) to anthranilate to yield N-(5'-phosphoribosyl)-anthranilate (PRA). The sequence is that of Anthranilate phosphoribosyltransferase from Salinibacter ruber (strain DSM 13855 / M31).